The following is a 129-amino-acid chain: UPF0102 protein Clim_0016 (129 aa).

It belongs to the UPF0102 family.

The chain is UPF0102 protein Clim_0016 from Chlorobium limicola (strain DSM 245 / NBRC 103803 / 6330).